A 211-amino-acid chain; its full sequence is Imidazole glycerol phosphate synthase subunit HisH (211 aa).

In terms of domain architecture, Glutamine amidotransferase type-1 spans 3–211 (VVAVIDYEMG…VSQVREKIAA (209 aa)). Residue Cys-81 is the Nucleophile of the active site. Active-site residues include His-186 and Glu-188.

As to quaternary structure, heterodimer of HisH and HisF.

The protein localises to the cytoplasm. The catalysed reaction is 5-[(5-phospho-1-deoxy-D-ribulos-1-ylimino)methylamino]-1-(5-phospho-beta-D-ribosyl)imidazole-4-carboxamide + L-glutamine = D-erythro-1-(imidazol-4-yl)glycerol 3-phosphate + 5-amino-1-(5-phospho-beta-D-ribosyl)imidazole-4-carboxamide + L-glutamate + H(+). It carries out the reaction L-glutamine + H2O = L-glutamate + NH4(+). It participates in amino-acid biosynthesis; L-histidine biosynthesis; L-histidine from 5-phospho-alpha-D-ribose 1-diphosphate: step 5/9. In terms of biological role, IGPS catalyzes the conversion of PRFAR and glutamine to IGP, AICAR and glutamate. The HisH subunit catalyzes the hydrolysis of glutamine to glutamate and ammonia as part of the synthesis of IGP and AICAR. The resulting ammonia molecule is channeled to the active site of HisF. The sequence is that of Imidazole glycerol phosphate synthase subunit HisH from Nostoc sp. (strain PCC 7120 / SAG 25.82 / UTEX 2576).